Here is a 666-residue protein sequence, read N- to C-terminus: Protein-arginine deiminase type-4 (666 aa).

The Ca(2+) site is built by Asn-153, Asp-155, Asp-165, Asp-168, Asp-176, and Asp-179. A citrulline mark is found at Arg-212 and Arg-218. Gln-349 is a Ca(2+) binding site. The active site involves Asp-350. Ca(2+) is bound by residues Glu-351, Glu-353, Asp-369, and Ser-370. 3 positions are modified to citrulline: Arg-372, Arg-374, and Arg-383. Arg-374 contacts substrate. The Ca(2+) site is built by Phe-407, Leu-410, and Glu-411. Catalysis depends on residues His-471, Asp-473, and Cys-648.

It belongs to the protein arginine deiminase family. Ca(2+) serves as cofactor. In terms of processing, autocitrullination at Arg-372 and Arg-374 inactivates the enzyme. Expressed in pluripotent embryonic stem and induced pluripotent stem cells but not multipotent neural stem cells.

It is found in the cytoplasm. It localises to the nucleus. Its subcellular location is the cytoplasmic granule. It carries out the reaction L-arginyl-[protein] + H2O = L-citrullyl-[protein] + NH4(+). Strongly Inhibited by F-amidine and N-alpha-benzoyl-N5-(2-chloro-1-iminoethyl)-L-ornithine amide (Cl-amidine). These inhibitors are however not specific to PADI4 and also inhibit other members of the family. Its function is as follows. Catalyzes the citrullination/deimination of arginine residues of proteins such as histones, thereby playing a key role in histone code and regulation of stem cell maintenance. Citrullinates histone H1 at 'Arg-54' (to form H1R54ci), histone H3 at 'Arg-2', 'Arg-8', 'Arg-17' and/or 'Arg-26' (to form H3R2ci, H3R8ci, H3R17ci, H3R26ci, respectively) and histone H4 at 'Arg-3' (to form H4R3ci). Acts as a key regulator of stem cell maintenance by mediating citrullination of histone H1: citrullination of 'Arg-54' of histone H1 (H1R54ci) results in H1 displacement from chromatin and global chromatin decondensation, thereby promoting pluripotency and stem cell maintenance. Promotes profound chromatin decondensation during the innate immune response to infection in neutrophils by mediating formation of H1R54ci. Required for the formation of neutrophil extracellular traps (NETs); NETs are mainly composed of DNA fibers and are released by neutrophils to bind pathogens during inflammation. Citrullination of histone H3 prevents their methylation by CARM1 and HRMT1L2/PRMT1 and represses transcription. Citrullinates EP300/P300 at 'Arg-2142', which favors its interaction with NCOA2/GRIP1. This is Protein-arginine deiminase type-4 (Padi4) from Mus musculus (Mouse).